Reading from the N-terminus, the 154-residue chain is Mating pheromone 2 (154 aa).

An N-terminal signal peptide occupies residues 1–16; it reads MKAIFIILAILMVTQA. Residues 17–52 constitute a propeptide that is removed on maturation; that stretch reads FKMTSKVNTKLQSQIQSKFQSKNKLASTFQTSSQLK.

It is found in the secreted. Functionally, mating ciliate pheromones (or gamones) are diffusible extracellular communication signals that distinguish different intraspecific classes of cells commonly referred to as 'mating types'. They prepare the latter for conjugation by changing their cell surface properties. In Euplotoides octocarinatus (Freshwater ciliate), this protein is Mating pheromone 2.